The sequence spans 194 residues: Holliday junction branch migration complex subunit RuvA (194 aa).

Residues 1-64 form a domain I region; it reads MISRLTGKLV…EDAHLLFGFA (64 aa). Positions 65–143 are domain II; it reads TAEERKTFRQ…AHAVTDGLFA (79 aa). The tract at residues 144–147 is flexible linker; it reads AAPA. Positions 147–194 are domain III; sequence AADETEDIVGTLLALGYSEREAKAAVKGVPKGTDVGEGVRLALKNLLK.

The protein belongs to the RuvA family. As to quaternary structure, homotetramer. Forms an RuvA(8)-RuvB(12)-Holliday junction (HJ) complex. HJ DNA is sandwiched between 2 RuvA tetramers; dsDNA enters through RuvA and exits via RuvB. An RuvB hexamer assembles on each DNA strand where it exits the tetramer. Each RuvB hexamer is contacted by two RuvA subunits (via domain III) on 2 adjacent RuvB subunits; this complex drives branch migration. In the full resolvosome a probable DNA-RuvA(4)-RuvB(12)-RuvC(2) complex forms which resolves the HJ.

The protein resides in the cytoplasm. In terms of biological role, the RuvA-RuvB-RuvC complex processes Holliday junction (HJ) DNA during genetic recombination and DNA repair, while the RuvA-RuvB complex plays an important role in the rescue of blocked DNA replication forks via replication fork reversal (RFR). RuvA specifically binds to HJ cruciform DNA, conferring on it an open structure. The RuvB hexamer acts as an ATP-dependent pump, pulling dsDNA into and through the RuvAB complex. HJ branch migration allows RuvC to scan DNA until it finds its consensus sequence, where it cleaves and resolves the cruciform DNA. This is Holliday junction branch migration complex subunit RuvA from Neisseria meningitidis serogroup C / serotype 2a (strain ATCC 700532 / DSM 15464 / FAM18).